A 242-amino-acid polypeptide reads, in one-letter code: UPF0073 membrane protein Rv1085c (242 aa).

7 consecutive transmembrane segments (helical) span residues 42–62, 67–87, 108–128, 133–153, 159–179, 186–206, and 222–242; these read VYSAGTAVLAGASLVAVSWAV, AGLTTLAYTAATITMFTVSAT, SMIFVFIAGSYTPFALLALPA, VVLSIVWGGAIAGILLKMCWP, VGVPLYLLLGWVAVWYTATIL, ALVLLFVGGALYSIGGILYAV, and FHACTAVAAICHYIAMWFVVF.

This sequence belongs to the UPF0073 (Hly-III) family.

It localises to the cell membrane. This is UPF0073 membrane protein Rv1085c from Mycobacterium tuberculosis (strain ATCC 25618 / H37Rv).